The chain runs to 122 residues: Large ribosomal subunit protein uL14 (122 aa).

This sequence belongs to the universal ribosomal protein uL14 family. In terms of assembly, part of the 50S ribosomal subunit. Forms a cluster with proteins L3 and L19. In the 70S ribosome, L14 and L19 interact and together make contacts with the 16S rRNA in bridges B5 and B8.

Functionally, binds to 23S rRNA. Forms part of two intersubunit bridges in the 70S ribosome. In Roseiflexus castenholzii (strain DSM 13941 / HLO8), this protein is Large ribosomal subunit protein uL14.